The following is a 315-amino-acid chain: DNA-directed RNA polymerase subunit alpha (315 aa).

The segment at 1–228 is alpha N-terminal domain (alpha-NTD); that stretch reads MLEIEKPKIE…EHFKLFMTLT (228 aa). Residues 245–315 are alpha C-terminal domain (alpha-CTD); that stretch reads KEKVLEMTIE…LELGLKQSEE (71 aa).

The protein belongs to the RNA polymerase alpha chain family. Homodimer. The RNAP catalytic core consists of 2 alpha, 1 beta, 1 beta' and 1 omega subunit. When a sigma factor is associated with the core the holoenzyme is formed, which can initiate transcription.

The catalysed reaction is RNA(n) + a ribonucleoside 5'-triphosphate = RNA(n+1) + diphosphate. Functionally, DNA-dependent RNA polymerase catalyzes the transcription of DNA into RNA using the four ribonucleoside triphosphates as substrates. The chain is DNA-directed RNA polymerase subunit alpha from Clostridium tetani (strain Massachusetts / E88).